The following is a 534-amino-acid chain: Phosphoenolpyruvate carboxykinase (ATP) (534 aa).

Residues R59, Y200, and K206 each coordinate substrate. ATP is bound by residues K206, H225, and 242–250 (GLSGTGKTT). Mn(2+)-binding residues include K206 and H225. D263 contributes to the Mn(2+) binding site. Residues E291, R327, 443–444 (RI), and T449 each bind ATP. R327 serves as a coordination point for substrate.

It belongs to the phosphoenolpyruvate carboxykinase (ATP) family. The cofactor is Mn(2+).

It localises to the cytoplasm. The enzyme catalyses oxaloacetate + ATP = phosphoenolpyruvate + ADP + CO2. It functions in the pathway carbohydrate biosynthesis; gluconeogenesis. Involved in the gluconeogenesis. Catalyzes the conversion of oxaloacetate (OAA) to phosphoenolpyruvate (PEP) through direct phosphoryl transfer between the nucleoside triphosphate and OAA. The protein is Phosphoenolpyruvate carboxykinase (ATP) of Lachnospira eligens (strain ATCC 27750 / DSM 3376 / VPI C15-48 / C15-B4) (Eubacterium eligens).